Here is a 716-residue protein sequence, read N- to C-terminus: Macrophage-expressed gene 1 protein (716 aa).

Residues 1 to 20 form the signal peptide; sequence MNNFRATILFWAVAAWVTSG. One can recognise an MACPF domain in the interval 30-345; that stretch reads GVQKCKNALK…TAVKRYYTFN (316 aa). A disulfide bridge connects residues C34 and C70. The next 2 membrane-spanning stretches (beta stranded) occupy residues 113 to 120 and 127 to 132; these read YSINTELS and GKFSTE. N168 and N185 each carry an N-linked (GlcNAc...) asparagine glycan. 2 beta stranded membrane passes run 235–244 and 248–256; these read AVTASAGLAF and VNFKFEENY. A glycan (N-linked (GlcNAc...) asparagine) is linked at N269. A disulfide bond links C350 and C369. N-linked (GlcNAc...) asparagine glycosylation is present at N375. 5 disulfide bridges follow: C385–C397, C435–C449, C439–C445, C534–C572, and C557–C577. The P2 stretch occupies residues 413 to 656; sequence PSGYSPVRLL…GDGGGLSGGA (244 aa). Residues 656–676 traverse the membrane as a helical segment; it reads AAAGVTLGVTTILAVVITLAI. The interval 693-716 is disordered; it reads RQSLVPGTAATGDTTYQEQGQSPA. Residues 703 to 716 show a composition bias toward polar residues; sequence TGDTTYQEQGQSPA.

Belongs to the MPEG1 family. As to quaternary structure, homooligomer; predominantly forms a homooligomeric arc-shaped pore complex instead of complete rings of 16 subunits. Post-translationally, proteolytically processed in two steps to generate the Macrophage-expressed gene 1 protein, processed form: cleaved by trypsin in proximity of the helical transmembrane domain releases the ectodomain into the lysosomal lumen to orient the pore-forming domain toward the endogenous membranes, and processed by the asparagine endopeptidase (LGMN). Proteolytic processing in antigen-containing vesicles is pH-dependent. Monoubiquitinated in response to bacterial infection; ubiquitination is required for vesicular localization and antibacterial activity and can be blocked by bacterial cell cycle inhibiting factor (cif).

The protein resides in the cytoplasmic vesicle membrane. The protein localises to the cytoplasmic vesicle. It localises to the phagosome membrane. Its activity is regulated as follows. Forms arc- and ring-shaped pre-pores on top of the membrane at neutral to slightly acidic pH conditions and converts to pores upon acidification. Undergoes transition from the pre-pore to the pore in a processive clockwise hand-over-hand process. In the pore state, 2 alpha-helical regions refold into transmembrane hairpins (TMH1 and TMH2) in each protomer that form in the ensemble complex giant beta-barrel transmembrane pores. Its function is as follows. Pore-forming protein involved in both innate and adaptive immunity. Plays a central role in antigen cross-presentation in dendritic cells by forming a pore in antigen-containing compartments, thereby promoting delivery of antigens for cross-presentation. Also involved in innate immune response following bacterial infection; shows antibacterial activity against a wide spectrum of Gram-positive, Gram-negative and acid-fast bacteria. Reduces the viability of the intracytosolic pathogen L.monocytogenes by inhibiting acidification of the phagocytic vacuole of host cells which restricts bacterial translocation from the vacuole to the cytosol. Required for the antibacterial activity of reactive oxygen species and nitric oxide. Functionally, pore-forming protein that plays a central role in antigen cross-presentation in dendritic cells by mediating delivery of antigens for cross-presentation. Dendritic cells bridge innate and adaptive immunity by capturing exogenous antigens on MHC class-I molecules and presenting them to naive CD8(+) T-cells. Acts by forming a pore in antigen-containing compartments, promoting the release of antigens into the cytosol, enabling generation of MHCI:peptide complexes and T-cell priming. This chain is Macrophage-expressed gene 1 protein (MPEG1), found in Pongo abelii (Sumatran orangutan).